The sequence spans 171 residues: MQMYHVVLGCSLAILLVILDIPQASCDDVVIQKRQVDPAEMDRLLDPKRKRPFCNAFTGCGKKRSDESMGTLVEMNSEPAVDDLSRQILSEVKLWEAIQEARVELLRRRQEQLQQQSNQFGAGMDRPLPLPIAGYRRKRFADPESQAPAPHSNLPRATSQLQEEITKPWSR.

The signal sequence occupies residues 1–26 (MQMYHVVLGCSLAILLVILDIPQASC). The propeptide occupies 27–49 (DDVVIQKRQVDPAEMDRLLDPKR). Cys54 and Cys60 are oxidised to a cystine. Cys60 is subject to Cysteine amide. The propeptide occupies 64 to 171 (RSDESMGTLV…QEEITKPWSR (108 aa)). Residues 116–171 (QSNQFGAGMDRPLPLPIAGYRRKRFADPESQAPAPHSNLPRATSQLQEEITKPWSR) are disordered.

As to expression, central nervous system; most neurons exhibit coexpression with burs.

The protein resides in the secreted. Cardioregulatory neurohormone that increases heart beat rate during adult wing inflation; has no effect on beat amplitude. The effect of CCAP is both ino- and chronotropic. This chain is Cardioactive peptide, found in Periplaneta americana (American cockroach).